We begin with the raw amino-acid sequence, 269 residues long: Signal recognition particle receptor subunit beta (269 aa).

Residues 35-55 (LLSVAVALLAVLLTLVFWKFI) form a helical membrane-spanning segment. GTP is bound by residues 69–77 (GLCDSGKTL) and 90–93 (TQTS). S110 bears the Phosphoserine mark. Residues G118 and 178–181 (NKQD) each bind GTP. Phosphothreonine is present on T212. A246 serves as a coordination point for GTP.

Belongs to the SRP receptor beta subunit family. In terms of assembly, heterodimer with SRPRA.

Its subcellular location is the endoplasmic reticulum membrane. Functionally, component of the SRP (signal recognition particle) receptor. Ensures, in conjunction with the signal recognition particle, the correct targeting of the nascent secretory proteins to the endoplasmic reticulum membrane system. May mediate the membrane association of SR. This chain is Signal recognition particle receptor subunit beta (Srprb), found in Mus musculus (Mouse).